Here is a 98-residue protein sequence, read N- to C-terminus: Exopolysaccharide production repressor protein (98 aa).

2 helical membrane-spanning segments follow: residues V6–G26 and T35–W55. The disordered stretch occupies residues A73–S98. Residues S86–S98 are compositionally biased toward basic residues.

The protein resides in the cell membrane. Its pathway is glycan metabolism; exopolysaccharide biosynthesis. Functionally, inhibition of exopolysaccharide synthesis (EPS) and nodulation ability (NOD). This chain is Exopolysaccharide production repressor protein (exoX), found in Rhizobium meliloti (strain 1021) (Ensifer meliloti).